A 954-amino-acid polypeptide reads, in one-letter code: Protein teashirt (954 aa).

Disordered stretches follow at residues 20–91, 167–207, and 276–331; these read LPTA…SLPS, ESAE…PQLG, and VKGG…GSGA. The span at 47–57 shows a compositional bias: gly residues; sequence HGGGAGSGGVG. A compositionally biased stretch (polar residues) spans 292-303; it reads SKATTPQAASQP. Over residues 318–328 the composition is skewed to gly residues; it reads SGGGSGGGAAG. A C2H2-type 1 zinc finger spans residues 354–378; it reads FRCVWCKQSFPTLEALTTHMKDSKH. Residues 383 to 444 are disordered; sequence VPPFGNLPSN…YRGDPPTPLP (62 aa). A compositionally biased stretch (low complexity) spans 417–428; that stretch reads SGSASNHSPSAN. 2 C2H2-type zinc fingers span residues 466-490 and 533-557; these read LKCMRCGESFRSLGEMTKHMQETQH and LTCKVCDKAFNSLGDLSNHMAKNNH. 3 disordered regions span residues 563 to 622, 689 to 714, and 748 to 935; these read LQSA…DKND, FDTPPRHASLPASSPSNSSTKNTSPV, and TSSE…NLTA. A compositionally biased stretch (basic residues) spans 568 to 578; the sequence is ARKRPAPKKRE. Residues 579–588 are compositionally biased toward basic and acidic residues; that stretch reads KSLPVRKLLE. Low complexity predominate over residues 696–712; that stretch reads ASLPASSPSNSSTKNTS. A phosphoserine mark is found at serine 750 and serine 758. Over residues 778-807 the composition is skewed to basic and acidic residues; the sequence is GHDEESSKPAIKQEREAESKPVKMEIKSEF. Low complexity predominate over residues 842–851; the sequence is PKTPSSAASP. Composition is skewed to polar residues over residues 862 to 885 and 893 to 907; these read AESQRSVTPKSPASSHKSYDGSSE and DSLNALSSMFDSLGS. A compositionally biased stretch (low complexity) spans 910 to 926; that stretch reads AGANSRAKLAAAAAAGG.

Belongs to the teashirt C2H2-type zinc-finger protein family. As to quaternary structure, binds arm. As to expression, shows a dynamic expression pattern during embryogenesis. Expressed in the embryonic trunk region (PS 3-13) with expression strongest in the thoracic segments. Expressed in a small group of cells corresponding to the anal tuft from stage 14. Strongly expressed in the embryonic ventral nerve cord. Also expressed in the proximal domain of the leg imaginal disk and in the region of the wing disk that will give rise to the proximal wing hinge. Expressed at high levels in the anterior and central embryonic midgut mesoderm and in the embryonic midgut endoderm. Expressed at a low level in more posterior visceral mesoderm of the gut. From stage 12 onwards, tsh and tio are colocalized in some cells of the CNS, trunk epidermis, hindgut and Malpighian tubules.

The protein resides in the nucleus. It is found in the cytoplasm. Functionally, homeotic protein that acts downstream of Arm in the Wg cascade during embryogenesis to determine segment identity throughout the entire trunk. Acts cooperatively with other trunk homeotic proteins to repress head homeotic genes and therefore repress head segmental identity. Necessary, in combination with Scr, for the formation of the prothoracic segment. Promotes eye development in the dorsal region of the eye disk and suppresses eye development in the ventral region in combination with Wg-signaling and several early dorso-ventral eye patterning genes. Required for proper development of proximal leg segments. Has differential functions along the dorso-ventral axs of the antennal and leg disks. May play a role in wing hinge development. Possible involvement in chromatin structure for modulation of transcription. Binds DNA and can act as both a transcriptional repressor and activator. Positively regulates its own expression as well as that of Dll. Negatively regulates the expression of mod. Required for Wg-mediated transcriptional repression of Ubx in the midgut. Also represses transcription of lab in the midgut and is necessary for the proper formation of anterior and central midgut structures. Tiptop (tio) and teashirt (tsh) have, on the whole, common activities. Tio and tsh repress each other's expression and tsh has a crucial role for trunk patterning that is in part masked by ectopic expression of tiptop. Both genes share a common activity required for the activation of Ser and svb and the maintenance of en and wg. This chain is Protein teashirt (tsh), found in Drosophila melanogaster (Fruit fly).